Consider the following 372-residue polypeptide: uncharacterized protein (372 aa).

The first 24 residues, 1-24 (MSYYQIIVCILASISYIILLEVIA), serve as a signal peptide directing secretion. The 124-residue stretch at 92 to 215 (PNRNDTDASY…SSYNLLWSDL (124 aa)) folds into the PA domain. A helical membrane pass occupies residues 236-256 (FWPFLLCFSPSIIMLITVQAL). The residue at position 280 (serine 280) is a Phosphoserine. The segment at 321–363 (CVICLESFTKGDKVVALPCKHEFHRPCIAKWIVDYRHACPTCN) adopts an RING-type; atypical zinc-finger fold.

The protein localises to the golgi apparatus membrane. It localises to the vacuole membrane. This is an uncharacterized protein from Schizosaccharomyces pombe (strain 972 / ATCC 24843) (Fission yeast).